The following is a 947-amino-acid chain: Protocadherin alpha-4 (947 aa).

A signal peptide spans 1 to 29 (MEFSWGSGQESRRLLLLLLLLAAWEAGNG). 6 Cadherin domains span residues 30 to 133 (QLHY…PPVF), 134 to 242 (PATQ…APAF), 243 to 350 (DRTI…VPDL), 351 to 455 (EFKS…APAF), 456 to 565 (AQPE…APAL), and 588 to 678 (GHVV…APKA). Over 30-697 (QLHYSVSEEA…GPDAALVDVN (668 aa)) the chain is Extracellular. A disulfide bond links cysteine 96 and cysteine 102. Asparagine 139, asparagine 257, and asparagine 265 each carry an N-linked (GlcNAc...) asparagine glycan. A glycan (N-linked (GlcNAc...) asparagine) is linked at asparagine 548. A helical transmembrane segment spans residues 698 to 718 (VYLIIAICAVSSLLVLTLLLY). Residues 719–947 (TALRCSALPT…GNSTTDNSDQ (229 aa)) lie on the Cytoplasmic side of the membrane. PXXP repeat units lie at residues 734 to 737 (PGKP), 774 to 777 (PSLP), 796 to 799 (PRQP), 829 to 832 (PGGP), 870 to 873 (PGNP), and 888 to 891 (PGSP). Residues 734-891 (PGKPTLVCSS…PDKFIIPGSP (158 aa)) form a 6 X 4 AA repeats of P-X-X-P region. The interval 738–947 (TLVCSSAVGS…GNSTTDNSDQ (210 aa)) is required for interaction with FYN. Disordered regions lie at residues 754 to 805 (RRPR…DWRY), 828 to 853 (GPGG…EVSP), and 868 to 947 (YGPG…NSDQ). The span at 906–920 (DKSDFITFGKKEETK) shows a compositional bias: basic and acidic residues.

In terms of assembly, forms homodimers in trans (molecules expressed by two different cells). Forms promiscuous heterodimers in cis (at the plasma membrane of the same cell) with other protocadherins. Interacts with FYN.

The protein resides in the cell membrane. Calcium-dependent cell-adhesion protein involved in cells self-recognition and non-self discrimination. Thereby, it is involved in the establishment and maintenance of specific neuronal connections in the brain. This chain is Protocadherin alpha-4, found in Homo sapiens (Human).